The chain runs to 576 residues: MNIFNKLKQDIIAASRQLYNNQEIANNATIETPKDNFNGDLSSNIAMIIAAKENISPREVALKFKEILITLPYIASIEIAGPGFINFTIKAETWQIAIKDILQHEEKFCEIDIDKSRNINIEYVSANPTGPMHIGHARGAVYGDVLARILQKVGYFVTKEYYVNDAGSQINDLVSTVLLRYREALGETITIPDGLYPGEYLIPLGQILAEEYGNKLLMMDEEERFKIVKNFAVEKMLDLNRKDLADLGIKHDIFFSEQSLHDKCAIEETVKLLTGMGLIYEGILPPPKGKVHDEWDNRVQKLFKSTNYGDSQDRPIEKADGSWSYFASDLAYAKDKIDRGVSHLIYVLGADHSGYVKRIEAIVKALGKEQVKVDVKICQLVNFVENGVPVKMSKRLGSFASVQDVNHEVGKDIIRFMMLTRQNDKPLDFDLVKVKEQSRENPIFYVQYAHVRTISILSKARELMPESYNNFEACKYDLSLLSSEEEIAIIKLLASWTKTLETSAKYFEPHRIAFYLINLASKFHSMWNFGKEHSDYRFIIESNKELTTARLALATAIQKVIASGLEVIGVEPMDRM.

Positions 126–136 (ANPTGPMHIGH) match the 'HIGH' region motif.

Belongs to the class-I aminoacyl-tRNA synthetase family. As to quaternary structure, monomer.

The protein resides in the cytoplasm. The enzyme catalyses tRNA(Arg) + L-arginine + ATP = L-arginyl-tRNA(Arg) + AMP + diphosphate. This is Arginine--tRNA ligase from Rickettsia akari (strain Hartford).